The primary structure comprises 505 residues: ATP synthase subunit alpha (505 aa).

ATP is bound at residue G170–T177.

Belongs to the ATPase alpha/beta chains family. In terms of assembly, F-type ATPases have 2 components, CF(1) - the catalytic core - and CF(0) - the membrane proton channel. CF(1) has five subunits: alpha(3), beta(3), gamma(1), delta(1), epsilon(1). CF(0) has four main subunits: a(1), b(1), b'(1) and c(9-12).

The protein resides in the cellular thylakoid membrane. The catalysed reaction is ATP + H2O + 4 H(+)(in) = ADP + phosphate + 5 H(+)(out). Its function is as follows. Produces ATP from ADP in the presence of a proton gradient across the membrane. The alpha chain is a regulatory subunit. The sequence is that of ATP synthase subunit alpha from Prochlorococcus marinus subsp. pastoris (strain CCMP1986 / NIES-2087 / MED4).